Here is a 253-residue protein sequence, read N- to C-terminus: Vitamin B12 import ATP-binding protein BtuD (253 aa).

The 233-residue stretch at 4–236 (LQLNNVSVGT…DVLSQVFEVD (233 aa)) folds into the ABC transporter domain. 32–39 (GPNGAGKS) is a binding site for ATP.

The protein belongs to the ABC transporter superfamily. Vitamin B12 importer (TC 3.A.1.13.1) family. As to quaternary structure, the complex is composed of two ATP-binding proteins (BtuD), two transmembrane proteins (BtuC) and a solute-binding protein (BtuF).

The protein resides in the cell inner membrane. The enzyme catalyses an R-cob(III)alamin(out) + ATP + H2O = an R-cob(III)alamin(in) + ADP + phosphate + H(+). In terms of biological role, part of the ABC transporter complex BtuCDF involved in vitamin B12 import. Responsible for energy coupling to the transport system. The chain is Vitamin B12 import ATP-binding protein BtuD from Yersinia pestis.